A 142-amino-acid chain; its full sequence is Transcriptional regulator MraZ (142 aa).

SpoVT-AbrB domains follow at residues 5 to 47 and 76 to 119; these read EYQH…PLDE and ACEV…SKEK.

The protein belongs to the MraZ family. As to quaternary structure, forms oligomers.

Its subcellular location is the cytoplasm. It is found in the nucleoid. The chain is Transcriptional regulator MraZ from Clostridium beijerinckii (strain ATCC 51743 / NCIMB 8052) (Clostridium acetobutylicum).